A 422-amino-acid chain; its full sequence is 2-oxoglutarate and iron-dependent oxygenase JMJD4 (422 aa).

Residues glutamine 139–leucine 298 form the JmjC domain. Histidine 186, aspartate 188, and histidine 266 together coordinate Fe cation.

It belongs to the JMJD6 family. The cofactor is Fe(2+).

It localises to the cytoplasm. It carries out the reaction L-lysyl-[protein] + 2-oxoglutarate + O2 = 4-hydroxy-L-lysyl-[protein] + succinate + CO2. Functionally, catalyzes the 2-oxoglutarate and iron-dependent C4-lysyl hydroxylation of ETF1 at 'Lys-63' thereby promoting the translational termination efficiency of ETF1. The protein is 2-oxoglutarate and iron-dependent oxygenase JMJD4 (jmjd4) of Danio rerio (Zebrafish).